Here is a 363-residue protein sequence, read N- to C-terminus: 3-dehydroquinate synthase (363 aa).

Residues 71–76 (DGEQYK), 105–109 (GVIGD), 129–130 (TT), lysine 142, lysine 151, and 169–172 (CLKT) each bind NAD(+). Residues glutamate 184, histidine 247, and histidine 264 each coordinate Zn(2+).

Belongs to the sugar phosphate cyclases superfamily. Dehydroquinate synthase family. The cofactor is NAD(+). It depends on Co(2+) as a cofactor. Zn(2+) is required as a cofactor.

The protein resides in the cytoplasm. It carries out the reaction 7-phospho-2-dehydro-3-deoxy-D-arabino-heptonate = 3-dehydroquinate + phosphate. Its pathway is metabolic intermediate biosynthesis; chorismate biosynthesis; chorismate from D-erythrose 4-phosphate and phosphoenolpyruvate: step 2/7. In terms of biological role, catalyzes the conversion of 3-deoxy-D-arabino-heptulosonate 7-phosphate (DAHP) to dehydroquinate (DHQ). The polypeptide is 3-dehydroquinate synthase (Vibrio vulnificus (strain CMCP6)).